Here is a 296-residue protein sequence, read N- to C-terminus: 4-diphosphocytidyl-2-C-methyl-D-erythritol kinase (296 aa).

Residue Lys12 is part of the active site. Residue Pro94–Ser104 coordinates ATP. Asp136 is an active-site residue.

The protein belongs to the GHMP kinase family. IspE subfamily.

The catalysed reaction is 4-CDP-2-C-methyl-D-erythritol + ATP = 4-CDP-2-C-methyl-D-erythritol 2-phosphate + ADP + H(+). Its pathway is isoprenoid biosynthesis; isopentenyl diphosphate biosynthesis via DXP pathway; isopentenyl diphosphate from 1-deoxy-D-xylulose 5-phosphate: step 3/6. Functionally, catalyzes the phosphorylation of the position 2 hydroxy group of 4-diphosphocytidyl-2C-methyl-D-erythritol. The protein is 4-diphosphocytidyl-2-C-methyl-D-erythritol kinase of Variovorax paradoxus (strain S110).